Here is an 816-residue protein sequence, read N- to C-terminus: Fibroblast growth factor receptor (816 aa).

The signal sequence occupies residues 1-19; the sequence is MISDWCVVLVLLMSRLVFG. Residues 20 to 370 are Extracellular-facing; it reads LNFTEPVNYI…YKEESVEKTV (351 aa). 9 N-linked (GlcNAc...) asparagine glycosylation sites follow: Asn-21, Asn-69, Asn-119, Asn-156, Asn-171, Asn-244, Asn-274, Asn-313, and Asn-321. Residues 25 to 105 enclose the Ig-like C2-type 1 domain; the sequence is PVNYILKLGE…VTAMNEESVQ (81 aa). Cysteines 43 and 94 form a disulfide. Residues 126-217 enclose the Ig-like C2-type 2 domain; sequence LRIKNDISLL…GKIEHIMTVE (92 aa). Cys-147 and Cys-201 form a disulfide bridge. The chain crosses the membrane as a helical span at residues 371–391; it reads IFIVITSMLAGLIFVAFVIFF. The Cytoplasmic portion of the chain corresponds to 392–816; it reads ICRVRSKDKF…DILLSHYAVS (425 aa). The Protein kinase domain occupies 474–747; it reads LETDCLLGEG…QLIEDLERML (274 aa). ATP-binding positions include 480-488 and Lys-508; that span reads LGEGAFGRV. Residue Asp-612 is the Proton acceptor of the active site. Phosphotyrosine; by autocatalysis is present on Tyr-643.

This sequence belongs to the protein kinase superfamily. Tyr protein kinase family. Fibroblast growth factor receptor subfamily.

The protein resides in the membrane. The enzyme catalyses L-tyrosyl-[protein] + ATP = O-phospho-L-tyrosyl-[protein] + ADP + H(+). Its function is as follows. Receptor for basic fibroblast growth factor. The polypeptide is Fibroblast growth factor receptor (FGFR) (Hydra vulgaris (Hydra)).